The following is a 330-amino-acid chain: Anthranilate phosphoribosyltransferase (330 aa).

5-phospho-alpha-D-ribose 1-diphosphate contacts are provided by residues Gly79, 82 to 83 (GD), Thr87, 89 to 92 (NIST), 107 to 115 (KHGNYGVSS), and Ser119. Gly79 is a binding site for anthranilate. Ser91 contacts Mg(2+). Anthranilate is bound at residue Asn110. Residue Arg165 coordinates anthranilate. Residues Asp223 and Glu224 each coordinate Mg(2+).

The protein belongs to the anthranilate phosphoribosyltransferase family. As to quaternary structure, homodimer. Mg(2+) is required as a cofactor.

It carries out the reaction N-(5-phospho-beta-D-ribosyl)anthranilate + diphosphate = 5-phospho-alpha-D-ribose 1-diphosphate + anthranilate. It participates in amino-acid biosynthesis; L-tryptophan biosynthesis; L-tryptophan from chorismate: step 2/5. Catalyzes the transfer of the phosphoribosyl group of 5-phosphorylribose-1-pyrophosphate (PRPP) to anthranilate to yield N-(5'-phosphoribosyl)-anthranilate (PRA). The sequence is that of Anthranilate phosphoribosyltransferase from Flavobacterium johnsoniae (strain ATCC 17061 / DSM 2064 / JCM 8514 / BCRC 14874 / CCUG 350202 / NBRC 14942 / NCIMB 11054 / UW101) (Cytophaga johnsonae).